We begin with the raw amino-acid sequence, 1183 residues long: ATP-dependent helicase/nuclease subunit A (1183 aa).

The region spanning 3 to 461 (VQWTDEQQRA…IDLTKNFRSR (459 aa)) is the UvrD-like helicase ATP-binding domain. Residue 24 to 31 (AAAGSGKT) participates in ATP binding. The 297-residue stretch at 473 to 769 (RQVMDEAVGE…RIMTIHQSKG (297 aa)) folds into the UvrD-like helicase C-terminal domain.

This sequence belongs to the helicase family. AddA subfamily. Heterodimer of AddA and AddB/RexB. It depends on Mg(2+) as a cofactor.

The catalysed reaction is Couples ATP hydrolysis with the unwinding of duplex DNA by translocating in the 3'-5' direction.. It carries out the reaction ATP + H2O = ADP + phosphate + H(+). Its function is as follows. The heterodimer acts as both an ATP-dependent DNA helicase and an ATP-dependent, dual-direction single-stranded exonuclease. Recognizes the chi site generating a DNA molecule suitable for the initiation of homologous recombination. The AddA nuclease domain is required for chi fragment generation; this subunit has the helicase and 3' -&gt; 5' nuclease activities. The polypeptide is ATP-dependent helicase/nuclease subunit A (Exiguobacterium sibiricum (strain DSM 17290 / CCUG 55495 / CIP 109462 / JCM 13490 / 255-15)).